A 459-amino-acid polypeptide reads, in one-letter code: Cysteine--tRNA ligase (459 aa).

Zn(2+) is bound at residue C29. Residues 31–41 (PTVYNLVHIGN) carry the 'HIGH' region motif. Positions 209, 234, and 238 each coordinate Zn(2+). The 'KMSKS' region signature appears at 267 to 271 (KMSKS). Residue K270 coordinates ATP.

Belongs to the class-I aminoacyl-tRNA synthetase family. As to quaternary structure, monomer. Requires Zn(2+) as cofactor.

It is found in the cytoplasm. It carries out the reaction tRNA(Cys) + L-cysteine + ATP = L-cysteinyl-tRNA(Cys) + AMP + diphosphate. The polypeptide is Cysteine--tRNA ligase (Saccharophagus degradans (strain 2-40 / ATCC 43961 / DSM 17024)).